The primary structure comprises 322 residues: DNA primase small subunit PriS (322 aa).

Catalysis depends on residues D100, D102, and D228.

This sequence belongs to the eukaryotic-type primase small subunit family. As to quaternary structure, heterodimer of a small subunit (PriS) and a large subunit (PriL). It depends on Mg(2+) as a cofactor. Mn(2+) is required as a cofactor.

Its function is as follows. Catalytic subunit of DNA primase, an RNA polymerase that catalyzes the synthesis of short RNA molecules used as primers for DNA polymerase during DNA replication. The small subunit contains the primase catalytic core and has DNA synthesis activity on its own. Binding to the large subunit stabilizes and modulates the activity, increasing the rate of DNA synthesis while decreasing the length of the DNA fragments, and conferring RNA synthesis capability. The DNA polymerase activity may enable DNA primase to also catalyze primer extension after primer synthesis. May also play a role in DNA repair. The polypeptide is DNA primase small subunit PriS (Sulfolobus acidocaldarius (strain ATCC 33909 / DSM 639 / JCM 8929 / NBRC 15157 / NCIMB 11770)).